Reading from the N-terminus, the 243-residue chain is Carboxy-S-adenosyl-L-methionine synthase (243 aa).

S-adenosyl-L-methionine contacts are provided by residues Tyr40, Gly65 to Ser67, Asp90 to Asn91, Asp118 to Ile119, Asn133, and Arg200.

The protein belongs to the class I-like SAM-binding methyltransferase superfamily. Cx-SAM synthase family. In terms of assembly, homodimer.

The enzyme catalyses prephenate + S-adenosyl-L-methionine = carboxy-S-adenosyl-L-methionine + 3-phenylpyruvate + H2O. Functionally, catalyzes the conversion of S-adenosyl-L-methionine (SAM) to carboxy-S-adenosyl-L-methionine (Cx-SAM). This chain is Carboxy-S-adenosyl-L-methionine synthase, found in Shewanella frigidimarina (strain NCIMB 400).